A 396-amino-acid polypeptide reads, in one-letter code: Mannonate dehydratase (396 aa).

It belongs to the mannonate dehydratase family. The cofactor is Fe(2+). Requires Mn(2+) as cofactor.

The enzyme catalyses D-mannonate = 2-dehydro-3-deoxy-D-gluconate + H2O. It participates in carbohydrate metabolism; pentose and glucuronate interconversion. Catalyzes the dehydration of D-mannonate. The polypeptide is Mannonate dehydratase (Yersinia enterocolitica serotype O:8 / biotype 1B (strain NCTC 13174 / 8081)).